The primary structure comprises 876 residues: AP-5 complex subunit beta-1 (876 aa).

In terms of assembly, probably part of the adaptor protein complex 5 (AP-5), a tetramer composed of AP5B1, AP5M1, AP5S1 and AP5Z1. Interacts with ZFYVE26 and SPG11.

In terms of biological role, as part of AP-5, a probable fifth adaptor protein complex it may be involved in endosomal transport. In Mus musculus (Mouse), this protein is AP-5 complex subunit beta-1 (Ap5b1).